Consider the following 418-residue polypeptide: Glutamyl-tRNA reductase (418 aa).

Residues 49-52 (TCNR), Ser-105, 110-112 (EPQ), and Gln-116 each bind substrate. The Nucleophile role is filled by Cys-50. 185–190 (GAGEMI) contributes to the NADP(+) binding site.

It belongs to the glutamyl-tRNA reductase family. Homodimer.

The catalysed reaction is (S)-4-amino-5-oxopentanoate + tRNA(Glu) + NADP(+) = L-glutamyl-tRNA(Glu) + NADPH + H(+). Its pathway is porphyrin-containing compound metabolism; protoporphyrin-IX biosynthesis; 5-aminolevulinate from L-glutamyl-tRNA(Glu): step 1/2. Catalyzes the NADPH-dependent reduction of glutamyl-tRNA(Glu) to glutamate 1-semialdehyde (GSA). This Aromatoleum aromaticum (strain DSM 19018 / LMG 30748 / EbN1) (Azoarcus sp. (strain EbN1)) protein is Glutamyl-tRNA reductase.